A 177-amino-acid chain; its full sequence is Ribulose bisphosphate carboxylase small subunit, chloroplastic (177 aa).

Residues 1–55 (MASLMSNAAVVTASTAAQANMVAPFSGLKSTSAFPVSRKSNVDITSLATNGGRVN) constitute a chloroplast transit peptide.

It belongs to the RuBisCO small chain family. In terms of assembly, heterohexadecamer of 8 large and 8 small subunits.

The protein resides in the plastid. It localises to the chloroplast. In terms of biological role, ruBisCO catalyzes two reactions: the carboxylation of D-ribulose 1,5-bisphosphate, the primary event in carbon dioxide fixation, as well as the oxidative fragmentation of the pentose substrate. Both reactions occur simultaneously and in competition at the same active site. Although the small subunit is not catalytic it is essential for maximal activity. This Silene latifolia subsp. alba (White campion) protein is Ribulose bisphosphate carboxylase small subunit, chloroplastic.